Reading from the N-terminus, the 440-residue chain is APO protein 2, chloroplastic (440 aa).

Residues Met-1–Leu-62 constitute a chloroplast transit peptide. Basic and acidic residues predominate over residues Ala-106–Asp-115. The disordered stretch occupies residues Ala-106–Asn-126. APO domains are found at residues Ala-162 to Glu-247 and Val-332 to Glu-417.

The protein belongs to the APO family.

It localises to the plastid. It is found in the chloroplast. Functionally, may be involved in the stable assembly of several 4Fe-4S cluster-containing complexes of chloroplasts. This Arabidopsis thaliana (Mouse-ear cress) protein is APO protein 2, chloroplastic (APO2).